The chain runs to 611 residues: Growth hormone receptor (611 aa).

Residues Met-1–Ser-20 form the signal peptide. The N-linked (GlcNAc...) asparagine glycan is linked to Asn-16. The Extracellular segment spans residues Ala-21 to Glu-240. Cys-34 and Cys-44 are joined by a disulfide. A glycan (N-linked (GlcNAc...) asparagine) is linked at Asn-53. Cys-75 and Cys-86 are joined by a disulfide. Residue Asn-89 is glycosylated (N-linked (GlcNAc...) asparagine). A disulfide bond links Cys-100 and Cys-114. The Fibronectin type-III domain occupies Pro-125–Ala-228. Asn-130, Asn-135, and Asn-174 each carry an N-linked (GlcNAc...) asparagine glycan. The short motif at Phe-214–Ser-218 is the WSXWS motif element. Residues Phe-241–Ser-264 traverse the membrane as a helical segment. The Cytoplasmic segment spans residues Lys-265–Pro-611. Residues Lys-270–Ala-355 are required for JAK2 binding. The Box 1 motif signature appears at Ile-273–Lys-281. A UbE motif motif is present at residues Asp-316–Asp-325. Positions Ser-411–Asn-455 are disordered. A compositionally biased stretch (polar residues) spans Ser-414–Gln-433.

It belongs to the type I cytokine receptor family. Type 1 subfamily. In terms of processing, the soluble form (GHBP) is produced by phorbol ester-promoted proteolytic cleavage at the cell surface (shedding) by ADAM17/TACE.

Its subcellular location is the cell membrane. It is found in the secreted. Functionally, receptor for pituitary gland growth hormone (GH1) involved in regulating postnatal body growth. On ligand binding, couples to the JAK2/STAT5 pathway. In terms of biological role, the soluble form (GHBP) acts as a reservoir of growth hormone in plasma and may be a modulator/inhibitor of GH signaling. This chain is Growth hormone receptor (GHR), found in Columba livia (Rock dove).